The following is a 181-amino-acid chain: MELIFLSIALAMDSVAISMANGARCMNIKALQIFKMSFLFGIFQAFMPVIGYFLGLAFVGFISYIDHYVAFAILLFLGIKMIKESRQISVHCSLNLSLRMLMLGAFATSLDALAVGITFSFEEINIAIAAFVIGLVCFVLCVIASYMGRVLGEMLESKALVLGGVILILIGCKIIITHLIN.

Transmembrane regions (helical) follow at residues 3–23 (LIFL…ANGA), 42–62 (IFQA…VGFI), 63–83 (SYID…KMIK), 101–121 (LMLG…TFSF), 124–144 (INIA…CVIA), and 160–180 (LVLG…THLI).

It belongs to the MntP (TC 9.B.29) family.

It is found in the cell inner membrane. In terms of biological role, probably functions as a manganese efflux pump. The chain is Putative manganese efflux pump MntP from Campylobacter fetus subsp. fetus (strain 82-40).